The primary structure comprises 142 residues: Organic hydroperoxide resistance protein-like 2 (142 aa).

The protein belongs to the OsmC/Ohr family.

This Staphylococcus epidermidis (strain ATCC 12228 / FDA PCI 1200) protein is Organic hydroperoxide resistance protein-like 2.